A 91-amino-acid chain; its full sequence is MTKELCMRCYISGRVQGVWFRASAKNLAEQLMISGWARNLADGRVEVFACGKEDKLEEFYTWLQKGPLNARVDVCTRENLPWEDYITFDVL.

In terms of domain architecture, Acylphosphatase-like spans 6 to 91; the sequence is CMRCYISGRV…WEDYITFDVL (86 aa). Catalysis depends on residues R21 and N39.

Belongs to the acylphosphatase family.

It carries out the reaction an acyl phosphate + H2O = a carboxylate + phosphate + H(+). The polypeptide is Acylphosphatase (acyP) (Legionella pneumophila (strain Lens)).